Here is a 181-residue protein sequence, read N- to C-terminus: MRLFGYARVSTSQQSLDVQIKALKAENVRATRIFTDKVSGSHVNREGLRMLRLKVEEGDVVLVKKLDRLGRDTADMIQLIKEFDDMGVAIRFLDDGISTEGTMGKMVVTILSAVAQAERLRILERTNEGRLEAKAKGVKFGRKPTVDKAEVFTLHGQGISAMEIAKRLKIGRSTVYKVLAS.

The 136-residue stretch at 2 to 137 (RLFGYARVST…EGRLEAKAKG (136 aa)) folds into the Resolvase/invertase-type recombinase catalytic domain. Residue S10 is the O-(5'-phospho-DNA)-serine intermediate of the active site. Residues 161–180 (AMEIAKRLKIGRSTVYKVLA) constitute a DNA-binding region (H-T-H motif).

This sequence belongs to the site-specific recombinase resolvase family.

In terms of biological role, site-specific recombination protein. The chain is Resolvase/recombinase from Pseudomonas putida (Arthrobacter siderocapsulatus).